Consider the following 295-residue polypeptide: Bifunctional protein FolD (295 aa).

NADP(+) contacts are provided by residues 166 to 168, Ser195, and Ile236; that span reads GRS.

This sequence belongs to the tetrahydrofolate dehydrogenase/cyclohydrolase family. In terms of assembly, homodimer.

It catalyses the reaction (6R)-5,10-methylene-5,6,7,8-tetrahydrofolate + NADP(+) = (6R)-5,10-methenyltetrahydrofolate + NADPH. The catalysed reaction is (6R)-5,10-methenyltetrahydrofolate + H2O = (6R)-10-formyltetrahydrofolate + H(+). It participates in one-carbon metabolism; tetrahydrofolate interconversion. In terms of biological role, catalyzes the oxidation of 5,10-methylenetetrahydrofolate to 5,10-methenyltetrahydrofolate and then the hydrolysis of 5,10-methenyltetrahydrofolate to 10-formyltetrahydrofolate. In Chlorobium luteolum (strain DSM 273 / BCRC 81028 / 2530) (Pelodictyon luteolum), this protein is Bifunctional protein FolD.